The following is a 1214-amino-acid chain: Ubiquitin carboxyl-terminal hydrolase 36 (1214 aa).

The segment at 124 to 169 is disordered; that stretch reads AVGSNGHDNNTVNGGTVNGNRKQTVDSGQSNQNSSANPNELPKPKR. Over residues 132 to 143 the composition is skewed to low complexity; the sequence is NNTVNGGTVNGN. The segment covering 144–161 has biased composition (polar residues); sequence RKQTVDSGQSNQNSSANP. The region spanning 192–502 is the USP domain; it reads AGMLNVGNTC…NAYIMFYELD (311 aa). Cys201 functions as the Nucleophile in the catalytic mechanism. His461 serves as the catalytic Proton acceptor. Low complexity predominate over residues 509 to 523; the sequence is SSTINNNSSSSSNNS. The interval 509-532 is disordered; the sequence is SSTINNNSSSSSNNSVAPKLNGLR. Residues Ser553 and Ser555 each carry the phosphoserine modification. 5 disordered regions span residues 631–819, 836–964, 977–1001, 1048–1161, and 1176–1214; these read GEAA…KQKT, HRIA…ASKS, QKLLNGSAKSAATTRPGNGYQSESV, HGDT…PNFQ, and KFQQQRALQRHLAAGGGFTRRQQQSTGQQQQQQQQQQQS. The segment covering 633 to 651 has biased composition (low complexity); sequence AAPNANTNANANKSSCNNN. Residues 666 to 685 are compositionally biased toward acidic residues; sequence SDEDEDEDDSDDDDDDDDDD. Thr717 carries the phosphothreonine modification. Ser727 and Ser729 each carry phosphoserine. Low complexity-rich tracts occupy residues 735 to 751 and 785 to 816; these read QQQQQQQQQLLQTPQQL and KTNGSVSNTSNSSHSKAKSASNASSANVNSSK. Residues 856–868 are compositionally biased toward polar residues; it reads EQVQTEQGTKKLN. Residues 869–878 are compositionally biased toward low complexity; the sequence is SASSASASKS. A Phosphoserine modification is found at Ser891. Thr894 is modified (phosphothreonine). Phosphoserine is present on Ser897. The segment covering 915–942 has biased composition (acidic residues); it reads DDDDEEDEEEDDVEADADQEDDDDEVVV. Thr951 is modified (phosphothreonine). The span at 983 to 1001 shows a compositional bias: polar residues; sequence SAKSAATTRPGNGYQSESV. Low complexity predominate over residues 1058–1076; sequence NSSSNNSSNINSNSNSNSN. Positions 1089–1098 are enriched in basic and acidic residues; sequence EAREQRKRDA. Composition is skewed to low complexity over residues 1178-1188 and 1197-1214; these read QQQRALQRHLA and QQQSTGQQQQQQQQQQQS.

The protein belongs to the peptidase C19 family. In terms of assembly, interacts with atms/PAF1, but not with CycT.

The protein resides in the nucleus. The protein localises to the nucleolus. The enzyme catalyses Thiol-dependent hydrolysis of ester, thioester, amide, peptide and isopeptide bonds formed by the C-terminal Gly of ubiquitin (a 76-residue protein attached to proteins as an intracellular targeting signal).. Its function is as follows. Required for maintaining multiple types of adult stem cells, including male and female germline, epithelial follicle cell and intestinal stem cells. May function as a transcriptional repressor by continually deubiquiting histone H2B at the promoters of genes critical for cellular differentiation, thereby preventing histone H3 'Lys-4' trimethylation (H3K4). Controls selective autophagy activation by ubiquitinated proteins. In Drosophila virilis (Fruit fly), this protein is Ubiquitin carboxyl-terminal hydrolase 36 (Usp36).